A 121-amino-acid chain; its full sequence is Type II secretion system protein I (121 aa).

Positions 1 to 6 (MRRQKG) are cleaved as a propeptide — leader sequence. M7 carries the N-methylmethionine modification. The chain crosses the membrane as a helical span at residues 7–27 (MTLVEVLVALSVFALAGIAVL).

It belongs to the GSP I family. In terms of assembly, type II secretion is composed of four main components: the outer membrane complex, the inner membrane complex, the cytoplasmic secretion ATPase and the periplasm-spanning pseudopilus. Interacts with core component OutG. Post-translationally, cleaved by prepilin peptidase. Methylated by prepilin peptidase at the amino group of the N-terminal methionine once the leader sequence is cleaved by prepilin peptidase.

Its subcellular location is the cell inner membrane. Its function is as follows. Component of the type II secretion system required for the energy-dependent secretion of extracellular factors such as proteases and toxins from the periplasm. Part of the pseudopilus tip complex that is critical for the recognition and binding of secretion substrates. The polypeptide is Type II secretion system protein I (outI) (Pectobacterium carotovorum subsp. carotovorum (Erwinia carotovora subsp. carotovora)).